The following is a 501-amino-acid chain: Aminoaldehyde dehydrogenase ALDH10A8, chloroplastic (501 aa).

Na(+) is bound by residues Asp99 and Leu189. NAD(+) is bound by residues 238-243 (GSFATG) and 238-245 (GSFATGSK). Glu260 acts as the Proton acceptor in catalysis. Residues Cys294 and Glu393 each contribute to the NAD(+) site. Cys294 functions as the Nucleophile in the catalytic mechanism.

It belongs to the aldehyde dehydrogenase family. In terms of assembly, homodimer. As to expression, widely expressed.

The protein localises to the cytoplasm. It is found in the plastid. It localises to the chloroplast. The catalysed reaction is 4-aminobutanal + NAD(+) + H2O = 4-aminobutanoate + NADH + 2 H(+). It carries out the reaction 3-aminopropanal + NAD(+) + H2O = beta-alanine + NADH + 2 H(+). It catalyses the reaction 4-(trimethylamino)butanal + NAD(+) + H2O = 4-(trimethylamino)butanoate + NADH + 2 H(+). The enzyme catalyses 4-guanidinobutanal + NAD(+) + H2O = 4-guanidinobutanoate + NADH + 2 H(+). The catalysed reaction is betaine aldehyde + NAD(+) + H2O = glycine betaine + NADH + 2 H(+). It participates in amine and polyamine biosynthesis; betaine biosynthesis via choline pathway; betaine from betaine aldehyde: step 1/1. Its function is as follows. Dehydrogenase that catalyzes the oxidation of several aminoaldehydes. Metabolizes and detoxifies aldehyde products of polyamine degradation to non-toxic amino acids. Catalyzes the oxidation of 4-aminobutanal and 3-aminopropanal to 4-aminobutanoate and beta-alanine, respectively. Production of 4-aminobutinoate by ALDH10A8 may confer tolerance to salt stress. Catalyzes the oxidation of 4-(trimethylamino)butanal and 4-guanidinobutanal to 4-trimethylammoniobutanoate and 4-guanidinobutanoate, respectively. Involved in glycine betaine biosynthesis. Catalyzes with low efficiency the oxidation of betaine aldehyde to glycine betaine. This chain is Aminoaldehyde dehydrogenase ALDH10A8, chloroplastic, found in Arabidopsis thaliana (Mouse-ear cress).